The sequence spans 360 residues: Peptide chain release factor 1 (360 aa).

The residue at position 237 (Q237) is an N5-methylglutamine.

Belongs to the prokaryotic/mitochondrial release factor family. In terms of processing, methylated by PrmC. Methylation increases the termination efficiency of RF1.

It localises to the cytoplasm. Its function is as follows. Peptide chain release factor 1 directs the termination of translation in response to the peptide chain termination codons UAG and UAA. The polypeptide is Peptide chain release factor 1 (Pseudomonas entomophila (strain L48)).